Here is a 205-residue protein sequence, read N- to C-terminus: Ras-related protein Rab-4 (205 aa).

14–22 (GSQSVGKSC) is a binding site for GTP. The Effector region signature appears at 36-44 (STHTIGVDF). GTP is bound by residues 62–66 (DTAGQ), 120–123 (NKAD), and 150–152 (SAL). 2 S-geranylgeranyl cysteine lipidation sites follow: C203 and C205. C205 carries the post-translational modification Cysteine methyl ester.

This sequence belongs to the small GTPase superfamily. Rab family.

It is found in the cell membrane. Protein transport. Probably involved in vesicular traffic. The polypeptide is Ras-related protein Rab-4 (rab4) (Dictyostelium discoideum (Social amoeba)).